The sequence spans 112 residues: DNA-binding protein Memar_1972 (112 aa).

The interval Met-14–Gln-35 is disordered.

Belongs to the PDCD5 family.

This is DNA-binding protein Memar_1972 from Methanoculleus marisnigri (strain ATCC 35101 / DSM 1498 / JR1).